We begin with the raw amino-acid sequence, 132 residues long: Protein C10 (132 aa).

An N-acetylalanine modification is found at Ala2.

Belongs to the UPF0456 family.

It is found in the cytoplasm. Its function is as follows. In brain, may be required for corpus callosum development. This chain is Protein C10, found in Bos taurus (Bovine).